A 1256-amino-acid polypeptide reads, in one-letter code: MKRKHYFEFNHPFNPCPFEVFCWGTWKAVEYLRIENGTMTMRLLENGQVLDDIKPFQRLRIRSRKATLIDCTSFLRPGIDVCVLYQRDEETPEPVWVDARVLSIERKPHESECLCTFHVSVYIDQGCIGLEKHRMNKVPVLVGLNEIAILQKFCKEQSLDRYYRWRYSEDCSSLVKTRLNLGKFLPDLTWLLVTSVLKNIVFQIRTVHEKMVYQIVTDEDCEGSSSSLSAMNITVEDGVVMSKVVLFNPAEDTCQDSDVKEEIEEEVMELRRSKRRSGRPERYGDSEIQPDSKDGWVRMMPYRYNIWNVSSDDDDEEEDCEDDKDTDDDLYLPLSHLLRKKGSKKGFSKDKQREIVLVDKTERKKRKKTEGFSRSCELSVIPFTPVFEPIPLEQFGLNANSLCGGVSGNLMDEIDKYRSKAAKYGKKKKKKIEMEEMESDLGWNGPIGNVVHKRNGPHSRIRSVSRETGVSEEPQIYKKRTLSAGAYNKLIDSYMSRIDSTIAAKDKATNVVEQWQGLKNPASFSIEAEERLSEEEEDDGETSENEILWREMELCLASSYILDDHEVRVDNEAFHKATCDCEHDYELNEEIGMCCRLCGHVGTEIKHVSAPFARHKKWTTETKQINEDDINTTIVNQDGVESHTFTIPVASSDMPSAEESDNVWSLIPQLKRKLHLHQKKAFEFLWKNLAGSVVPAMMDPSSDKIGGCVVSHTPGAGKTFLIIAFLASYLKIFPGKRPLVLAPKTTLYTWYKEFIKWEIPVPVHLLHGRRTYCMSKEKTIQFEGIPKPSQDVMHVLDCLDKIQKWHAQPSVLVMGYTSFLTLMREDSKFAHRKYMAKVLRESPGLLVLDEGHNPRSTKSRLRKALMKVDTDLRILLSGTLFQNNFCEYFNTLCLARPKFVHEVLVELDKKFQTNQAEQKAPHLLENRARKFFLDIIAKKIDTKVGDERLQGLNMLRNMTSGFIDNYEGSGSGSGDVLPGLQIYTLLMNSTDVQHKSLTKLQNIMSTYHGYPLELELLITLAAIHPWLVKTTTCCAKFFNPQELLEIEKLKHDAKKGSKVMFVLNLVFRVVKREKILIFCHNIAPIRLFLELFENVFRWKRGRELLTLTGDLELFERGRVIDKFEEPGGQSRVLLASITACAEGISLTAASRVIMLDSEWNPSKTKQAIARAFRPGQQKVVYVYQLLSRGTLEEDKYRRTTWKEWVSSMIFSEEFVEDPSQWQAEKIEDDVLREIVEEDKVKSFHMIMKNEKASTGG.

2 disordered regions span residues 269 to 290 (ELRR…EIQP) and 448 to 467 (GNVV…VSRE). The span at 278–290 (GRPERYGDSEIQP) shows a compositional bias: basic and acidic residues. Over residues 451–463 (VHKRNGPHSRIRS) the composition is skewed to basic residues. Residues 699-898 (DPSSDKIGGC…FNTLCLARPK (200 aa)) form the Helicase ATP-binding domain. 712–719 (HTPGAGKT) contacts ATP. The DEAH box motif lies at 849-852 (DEGH). One can recognise a Helicase C-terminal domain in the interval 1061-1222 (FVLNLVFRVV…EFVEDPSQWQ (162 aa)).

It belongs to the helicase family. In terms of assembly, interacts with NRPD1, NRPD3 and SHH1.

The protein resides in the nucleus. Its subcellular location is the nucleoplasm. The protein localises to the nucleolus. Functionally, probable chromatin remodeling factor. Required for the initial establishment of DNA methylation and for accumulation of 24-nt siRNAs. May act on RNA templates by remodeling ribonucleoprotein structures and thereby influencing the availability of the RNA to polymerases. This Arabidopsis thaliana (Mouse-ear cress) protein is SNF2 domain-containing protein CLASSY 1 (CLSY1).